The sequence spans 147 residues: Phospholipase A2 SSD1043 (147 aa).

The first 22 residues, 1-22 (MSPKFMFFSIIAVWSCAAVTEA), serve as a signal peptide directing secretion. The propeptide occupies 23-28 (LFIQHR). 5 disulfide bridges follow: cysteine 55–cysteine 71, cysteine 70–cysteine 130, cysteine 77–cysteine 123, cysteine 86–cysteine 116, and cysteine 109–cysteine 121. Residues glycine 56 and glycine 58 each coordinate Ca(2+). The active site involves histidine 74. Aspartate 75 is a binding site for Ca(2+). Aspartate 124 is a catalytic residue.

The cofactor is Ca(2+). Expressed by the venom gland.

The protein localises to the secreted. The catalysed reaction is a 1,2-diacyl-sn-glycero-3-phosphocholine + H2O = a 1-acyl-sn-glycero-3-phosphocholine + a fatty acid + H(+). PLA2 catalyzes the calcium-dependent hydrolysis of the 2-acyl groups in 3-sn-phosphoglycerides. The protein is Phospholipase A2 SSD1043 of Scolopendra dehaani (Thai centipede).